The primary structure comprises 580 residues: 2-succinyl-5-enolpyruvyl-6-hydroxy-3-cyclohexene-1-carboxylate synthase (580 aa).

The protein belongs to the TPP enzyme family. MenD subfamily. In terms of assembly, homodimer. Mg(2+) serves as cofactor. The cofactor is Mn(2+). Thiamine diphosphate is required as a cofactor.

The enzyme catalyses isochorismate + 2-oxoglutarate + H(+) = 5-enolpyruvoyl-6-hydroxy-2-succinyl-cyclohex-3-ene-1-carboxylate + CO2. It functions in the pathway quinol/quinone metabolism; 1,4-dihydroxy-2-naphthoate biosynthesis; 1,4-dihydroxy-2-naphthoate from chorismate: step 2/7. The protein operates within quinol/quinone metabolism; menaquinone biosynthesis. Functionally, catalyzes the thiamine diphosphate-dependent decarboxylation of 2-oxoglutarate and the subsequent addition of the resulting succinic semialdehyde-thiamine pyrophosphate anion to isochorismate to yield 2-succinyl-5-enolpyruvyl-6-hydroxy-3-cyclohexene-1-carboxylate (SEPHCHC). The polypeptide is 2-succinyl-5-enolpyruvyl-6-hydroxy-3-cyclohexene-1-carboxylate synthase (Listeria welshimeri serovar 6b (strain ATCC 35897 / DSM 20650 / CCUG 15529 / CIP 8149 / NCTC 11857 / SLCC 5334 / V8)).